Reading from the N-terminus, the 317-residue chain is Pantothenate kinase (317 aa).

101–108 (GSVAVGKS) lines the ATP pocket.

This sequence belongs to the prokaryotic pantothenate kinase family.

The protein resides in the cytoplasm. It catalyses the reaction (R)-pantothenate + ATP = (R)-4'-phosphopantothenate + ADP + H(+). It participates in cofactor biosynthesis; coenzyme A biosynthesis; CoA from (R)-pantothenate: step 1/5. The sequence is that of Pantothenate kinase from Actinobacillus succinogenes (strain ATCC 55618 / DSM 22257 / CCUG 43843 / 130Z).